The following is a 147-amino-acid chain: MRTTYIAKPGEVERKWYVVDATDVPLGRLSSAVASILRGKNKPTFTPNVDTGDYVIVINAEKVALTGRKASNKVYYHHSNHPGGLKARTAGDYREKDPEKLLALSVKGMLPKGTLGRQQAKKLHVYRGADHKHEAQQPEVLDINKLI.

The protein belongs to the universal ribosomal protein uL13 family. As to quaternary structure, part of the 50S ribosomal subunit.

Its function is as follows. This protein is one of the early assembly proteins of the 50S ribosomal subunit, although it is not seen to bind rRNA by itself. It is important during the early stages of 50S assembly. The protein is Large ribosomal subunit protein uL13 of Ligilactobacillus salivarius (strain UCC118) (Lactobacillus salivarius).